Consider the following 361-residue polypeptide: Peroxidase A (361 aa).

Belongs to the peroxidase family. Partially N-glycosylated.

The protein resides in the secreted. It carries out the reaction 2 a phenolic donor + H2O2 = 2 a phenolic radical donor + 2 H2O. The sequence is that of Peroxidase A from Aloe vera (Aloe).